Here is a 316-residue protein sequence, read N- to C-terminus: Sulfate adenylyltransferase subunit 2 (316 aa).

Residues 297 to 316 (RAIDRDQSGSMEKKKREGYF) form a disordered region.

Belongs to the PAPS reductase family. CysD subfamily. In terms of assembly, heterodimer composed of CysD, the smaller subunit, and CysN.

It catalyses the reaction sulfate + ATP + H(+) = adenosine 5'-phosphosulfate + diphosphate. It participates in sulfur metabolism; hydrogen sulfide biosynthesis; sulfite from sulfate: step 1/3. In terms of biological role, with CysN forms the ATP sulfurylase (ATPS) that catalyzes the adenylation of sulfate producing adenosine 5'-phosphosulfate (APS) and diphosphate, the first enzymatic step in sulfur assimilation pathway. APS synthesis involves the formation of a high-energy phosphoric-sulfuric acid anhydride bond driven by GTP hydrolysis by CysN coupled to ATP hydrolysis by CysD. The protein is Sulfate adenylyltransferase subunit 2 of Allorhizobium ampelinum (strain ATCC BAA-846 / DSM 112012 / S4) (Agrobacterium vitis (strain S4)).